The following is a 395-amino-acid chain: Chorismate synthase (395 aa).

Arg-40 and Arg-46 together coordinate NADP(+). Residues 135 to 137 (RAS) and 256 to 257 (QA) each bind FMN. The segment covering 272 to 283 (RRGSQAHDEMRP) has biased composition (basic and acidic residues). The segment at 272–296 (RRGSQAHDEMRPGPDGILRSTNRAG) is disordered. FMN-binding positions include Gly-300, 315-319 (KPIST), and Arg-341.

This sequence belongs to the chorismate synthase family. Homotetramer. The cofactor is FMNH2.

The enzyme catalyses 5-O-(1-carboxyvinyl)-3-phosphoshikimate = chorismate + phosphate. It functions in the pathway metabolic intermediate biosynthesis; chorismate biosynthesis; chorismate from D-erythrose 4-phosphate and phosphoenolpyruvate: step 7/7. Its function is as follows. Catalyzes the anti-1,4-elimination of the C-3 phosphate and the C-6 proR hydrogen from 5-enolpyruvylshikimate-3-phosphate (EPSP) to yield chorismate, which is the branch point compound that serves as the starting substrate for the three terminal pathways of aromatic amino acid biosynthesis. This reaction introduces a second double bond into the aromatic ring system. The chain is Chorismate synthase from Rhodococcus opacus (strain B4).